A 384-amino-acid chain; its full sequence is Putative spore germination protein YfkR (384 aa).

An N-terminal signal peptide occupies residues 1 to 20 (MKKTIYKCVLPLLICILLTG). Residue cysteine 21 is the site of N-palmitoyl cysteine attachment. Cysteine 21 carries S-diacylglycerol cysteine lipidation.

Belongs to the GerABKC lipoprotein family.

The protein resides in the cell membrane. May be involved in spore germination. The sequence is that of Putative spore germination protein YfkR (yfkR) from Bacillus subtilis (strain 168).